The sequence spans 98 residues: Putative membrane protein insertion efficiency factor (98 aa).

The protein belongs to the UPF0161 family.

It is found in the cell inner membrane. In terms of biological role, could be involved in insertion of integral membrane proteins into the membrane. The sequence is that of Putative membrane protein insertion efficiency factor from Cupriavidus pinatubonensis (strain JMP 134 / LMG 1197) (Cupriavidus necator (strain JMP 134)).